Reading from the N-terminus, the 413-residue chain is Cyclic AMP-dependent transcription factor ATF-7 (413 aa).

The interval 1-285 (MGDDRPFVCS…GMVVGTASTM (285 aa)) is transactivation domain. The C2H2-type zinc-finger motif lies at 7-31 (FVCSAPGCGQRFTNEDHLAVHKHKH). The residue at position 51 (Thr-51) is a Phosphothreonine; by MAPK11. 2 positions are modified to phosphothreonine: Thr-53 and Thr-101. Disordered regions lie at residues 81 to 140 (ASDD…TTKP) and 299 to 337 (HPDA…RRQR). Residue Lys-107 forms a Glycyl lysine isopeptide (Lys-Gly) (interchain with G-Cter in SUMO1) linkage. 2 stretches are compositionally biased toward low complexity: residues 114-126 (VDSS…ASSP) and 307-320 (QPQV…PSTG). Residues 326–337 (TVDEDPDERRQR) are compositionally biased toward basic and acidic residues. Residues 332-395 (DERRQRFLER…AQLKQLLLAH (64 aa)) enclose the bZIP domain. The segment at 334–354 (RRQRFLERNRAAASRCRQKRK) is basic motif. Positions 360–388 (LEKKAEELTSQNIQLSNEVTLLRNEVAQL) are leucine-zipper.

Belongs to the bZIP family. Homodimer; binds DNA as homodimer. Heterodimer; heterodimerizes with other members of ATF family and with JUN family members. Interacts with JNK2; the interaction does not phosphorylate ATF7 but acts as a docking site for other ATF-associated partners such as JUN family members. Interacts (via its transactivation domain) with TAF12 the interaction potentiates the transactivation activity and is inhibited by ATF7 sumoylation. Interacts with TAF4; the interaction inhibits the TAF12-dependent transactivation. Interacts with MAPK9; the interaction does not phosphorylate ATF7 but acts as a docking site for ATF7-associated partners such as JUN. Interacts with Ku complex components XRCC6 and XRCC7. Interacts with TERT. Post-translationally, on EGF stimulation, phosphorylated first on Thr-53 allowing subsequent phosphorylation on Thr-51. This latter phosphorylation prevents sumoylation, increases binding to TAF12 and enhances transcriptional activity. Social isolation stress as well as TNF-alpha also induce the phosphorylation of ATF7. Phosphorylated in proliferating colonic and small intestinal epithelial cells. Sumoylation delays nuclear localization and inhibits transactivation activity through preventing binding to TAF12. RANBP2 appears to be the specific E3 ligase.

The protein localises to the nucleus. The protein resides in the nucleoplasm. It is found in the chromosome. Its subcellular location is the telomere. Functionally, stress-responsive chromatin regulator that plays a role in various biological processes including innate immunological memory, adipocyte differentiation or telomerase regulation. In absence of stress, contributes to the formation of heterochromatin and heterochromatin-like structure by recruiting histone H3K9 tri- and di-methyltransferases thus silencing the transcription of target genes such as Htr5b, STAT1 in adipocytes, or genes involved in innate immunity in macrophages and adipocytes. Phosphorylation of ATF7 disrupts interactions with histone methyltransferase and enhances the association with coactivators containing histone acetyltransferase and/or histone demethylase, leading to disruption of the heterochromatin-like structure and subsequently transcriptional activation. In response to TNF-alpha, which is induced by various stresses, phosphorylated ATF7 and telomerase are released from telomeres leading to telomere shortening. Also plays a role in maintaining epithelial regenerative capacity and protecting against cell death during intestinal epithelial damage and repair. The polypeptide is Cyclic AMP-dependent transcription factor ATF-7 (Atf7) (Mus musculus (Mouse)).